A 664-amino-acid polypeptide reads, in one-letter code: Chaperone protein DnaK (664 aa).

Threonine 201 is modified (phosphothreonine; by autocatalysis). Over residues 574–592 (LKEDASTEKIKEASEELSR) the composition is skewed to basic and acidic residues. A disordered region spans residues 574–664 (LKEDASTEKI…DVEIVDKPND (91 aa)). Low complexity predominate over residues 600 to 617 (AMQSQSASAAPSSAANAQ). Positions 639–649 (GNSTSASSNNE) are enriched in polar residues.

This sequence belongs to the heat shock protein 70 family.

Acts as a chaperone. This chain is Chaperone protein DnaK, found in Chlamydia felis (strain Fe/C-56) (Chlamydophila felis).